Here is a 458-residue protein sequence, read N- to C-terminus: Acetyl-CoA decarbonylase/synthase complex subunit gamma (458 aa).

In terms of domain architecture, 4Fe-4S spans 1-59 (MQVTAMDVYRLLPKTNCGKCNEASCMAFATKLIEKEVTLDDCPQLSGDERQKLENLLAP). [4Fe-4S] cluster-binding residues include Cys17, Cys20, Cys25, and Cys42.

Heterodimer of delta and gamma chains. The ACDS complex is made up of alpha, epsilon, beta, gamma and delta chains with a probable stoichiometry of (alpha(2)epsilon(2))(4)-beta(8)-(gamma(1)delta(1))(8). The cofactor is corrinoid. [4Fe-4S] cluster serves as cofactor.

The enzyme catalyses 5,6,7,8-tetrahydrosarcinapterin + methyl-Co(III)-[corrinoid Fe-S protein] = 5-methyltetrahydrosarcinapterin + Co(I)-[corrinoid Fe-S protein] + H(+). Its function is as follows. Part of a complex that catalyzes the reversible cleavage of acetyl-CoA, allowing autotrophic growth from CO(2). This Methanothermobacter thermautotrophicus (strain ATCC 29096 / DSM 1053 / JCM 10044 / NBRC 100330 / Delta H) (Methanobacterium thermoautotrophicum) protein is Acetyl-CoA decarbonylase/synthase complex subunit gamma.